The primary structure comprises 479 residues: ATP-dependent protease ATPase subunit HslU (479 aa).

ATP contacts are provided by residues isoleucine 32, 74 to 79 (GVGKTE), aspartate 290, glutamate 355, and arginine 427.

It belongs to the ClpX chaperone family. HslU subfamily. In terms of assembly, a double ring-shaped homohexamer of HslV is capped on each side by a ring-shaped HslU homohexamer. The assembly of the HslU/HslV complex is dependent on binding of ATP.

Its subcellular location is the cytoplasm. Its function is as follows. ATPase subunit of a proteasome-like degradation complex; this subunit has chaperone activity. The binding of ATP and its subsequent hydrolysis by HslU are essential for unfolding of protein substrates subsequently hydrolyzed by HslV. HslU recognizes the N-terminal part of its protein substrates and unfolds these before they are guided to HslV for hydrolysis. In Leptospira interrogans serogroup Icterohaemorrhagiae serovar Lai (strain 56601), this protein is ATP-dependent protease ATPase subunit HslU.